The sequence spans 274 residues: uncharacterized protein (274 aa).

This sequence belongs to the type II cytokine receptor family.

This is an uncharacterized protein from Sus scrofa (Pig).